Consider the following 99-residue polypeptide: Large ribosomal subunit protein uL23 (99 aa).

It belongs to the universal ribosomal protein uL23 family. As to quaternary structure, part of the 50S ribosomal subunit. Contacts protein L29, and trigger factor when it is bound to the ribosome.

One of the early assembly proteins it binds 23S rRNA. One of the proteins that surrounds the polypeptide exit tunnel on the outside of the ribosome. Forms the main docking site for trigger factor binding to the ribosome. The chain is Large ribosomal subunit protein uL23 from Lachnospira eligens (strain ATCC 27750 / DSM 3376 / VPI C15-48 / C15-B4) (Eubacterium eligens).